Consider the following 304-residue polypeptide: Oxygen-dependent coproporphyrinogen-III oxidase (304 aa).

A substrate-binding site is contributed by Ser-93. 2 residues coordinate a divalent metal cation: His-97 and His-107. The active-site Proton donor is the His-107. 109 to 111 (NVR) contacts substrate. A divalent metal cation contacts are provided by His-146 and His-176. The tract at residues 241 to 276 (YVEFNLVYDRGTLFGLQSGGRTESILMSLPPQVRWA) is important for dimerization. 259 to 261 (GGR) is a binding site for substrate.

Belongs to the aerobic coproporphyrinogen-III oxidase family. As to quaternary structure, homodimer. A divalent metal cation is required as a cofactor.

It is found in the cytoplasm. It carries out the reaction coproporphyrinogen III + O2 + 2 H(+) = protoporphyrinogen IX + 2 CO2 + 2 H2O. It participates in porphyrin-containing compound metabolism; protoporphyrin-IX biosynthesis; protoporphyrinogen-IX from coproporphyrinogen-III (O2 route): step 1/1. Functionally, involved in the heme biosynthesis. Catalyzes the aerobic oxidative decarboxylation of propionate groups of rings A and B of coproporphyrinogen-III to yield the vinyl groups in protoporphyrinogen-IX. The polypeptide is Oxygen-dependent coproporphyrinogen-III oxidase (Pseudomonas fluorescens (strain Pf0-1)).